Consider the following 423-residue polypeptide: AP-1 complex subunit mu-1 (423 aa).

The residue at position 2 (S2) is an N-acetylserine. Phosphothreonine occurs at positions 152, 154, and 223. The region spanning 168 to 421 (KNEVFLDVIE…ITQNGDYQLR (254 aa)) is the MHD domain.

Belongs to the adaptor complexes medium subunit family. As to quaternary structure, adaptor protein complex 1 (AP-1) is a heterotetramer composed of two large adaptins (gamma-type subunit AP1G1 and beta-type subunit AP1B1), a medium adaptin (mu-type subunit AP1M1 or AP1M2) and a small adaptin (sigma-type subunit AP1S1 or AP1S2 or AP1S3). Interacts with MARCHF11. Post-translationally, phosphorylation of membrane-bound AP1M1/AP1M2 increases its affinity for sorting signals.

The protein resides in the cytoplasmic vesicle. It is found in the clathrin-coated vesicle membrane. The protein localises to the golgi apparatus. Subunit of clathrin-associated adaptor protein complex 1 that plays a role in protein sorting in the trans-Golgi network (TGN) and endosomes. The AP complexes mediate the recruitment of clathrin to membranes and the recognition of sorting signals within the cytosolic tails of transmembrane cargo molecules. This is AP-1 complex subunit mu-1 from Bos taurus (Bovine).